The chain runs to 92 residues: MTVTNTPTPTFDQLTRYIRVRSEPEAKFVEFDFAIGHPELFVELVLPQDAFVKFCQHNRVVAMDEAMAKAVDDDMVKWRFGDVGRRLPKDPG.

As to quaternary structure, homotrimer or homotetramer. Interacts with the phenol hydroxylase components DmpL (P1 component) and DmpN (P3 component).

The protein operates within aromatic compound metabolism; phenol degradation. DmpK is an auxiliary protein associated with the multicomponent phenol hydroxylase DmpLMNOP and it may be involved in the post-translational incorporation of iron into the oxygenase component of the phenol hydroxylase. Required for growth on phenol but not for in vitro phenol hydroxylase activity. The sequence is that of Phenol 2-monooxygenase, auxiliary component DmpK from Pseudomonas sp. (strain CF600).